The following is a 100-amino-acid chain: Large ribosomal subunit protein uL23 (100 aa).

It belongs to the universal ribosomal protein uL23 family. In terms of assembly, part of the 50S ribosomal subunit. Contacts protein L29, and trigger factor when it is bound to the ribosome.

In terms of biological role, one of the early assembly proteins it binds 23S rRNA. One of the proteins that surrounds the polypeptide exit tunnel on the outside of the ribosome. Forms the main docking site for trigger factor binding to the ribosome. The chain is Large ribosomal subunit protein uL23 from Aliivibrio fischeri (strain MJ11) (Vibrio fischeri).